The chain runs to 1196 residues: DNA excision repair protein ERCC-5 homolog (1196 aa).

Positions 1–78 (MGVQGLWKLL…RIRPIFVFDG (78 aa)) are N-domain. Aspartate 30 provides a ligand contact to Mg(2+). Positions 31–67 (ISIWLNQAVKGARDRQGNAIQNAHLLTLFHRLCKLLF) are DNA-binding; may bind to the undamaged single-strand DNA of the DNA repair bubble. Aspartate 77 is a Mg(2+) binding site. The spacer region stretch occupies residues 79 to 818 (EAPLLKRQTL…LQLFGIPYIV (740 aa)). Disordered stretches follow at residues 152-176 (PLED…MNQK), 302-321 (KQEE…NSSQ), 629-661 (QTTQ…SSAM), and 722-758 (AVEE…DDVS). The segment covering 154-168 (EDNENNSSEEEEERE) has biased composition (acidic residues). Positions 311 to 321 (PPQSITFNSSQ) are enriched in polar residues. Residues 722-731 (AVEEGNSGSQ) show a composition bias toward polar residues. Positions 734–755 (PLEHDSGEPHEQSNSEESKDLD) are enriched in basic and acidic residues. An I-domain region spans residues 819–914 (APMEAEAQCA…VSAMEILNEF (96 aa)). Glutamate 822, glutamate 824, aspartate 843, and aspartate 845 together coordinate Mg(2+). Residues 853-869 (HVYKNFFSQNKHVEYYQ) form a DNA-binding; may bind to the undamaged single-strand DNA of the DNA repair bubble region. The DNA-binding; H2TH (helix-2turn-helix) motif which binds double-stranded DNA stretch occupies residues 881–913 (RSKLINLAYLLGSDYTEGIPTVGYVSAMEILNE). Aspartate 894 contacts Mg(2+). The interval 945–951 (TKVKKKL) is DNA-binding; may bind double-stranded DNA. Residues 1075–1196 (CTNQRKGQKT…KTMKETVKRK (122 aa)) are disordered. The Nuclear localization signal 1 signature appears at 1079 to 1095 (RKGQKTNTKSQGTKRRK). Positions 1119–1130 (SSKAYSSDGSSS) are enriched in low complexity. The span at 1142–1158 (KQSQSGIVGRQKASNKV) shows a compositional bias: polar residues. The Nuclear localization signal 2 motif lies at 1179–1196 (FQGKKTKSKTMKETVKRK).

It belongs to the XPG/RAD2 endonuclease family. XPG subfamily. Monomer. Homodimer. It depends on Mg(2+) as a cofactor.

The protein resides in the nucleus. The protein localises to the chromosome. Its function is as follows. Single-stranded structure-specific DNA endonuclease involved in DNA excision repair. Makes the 3'incision in DNA nucleotide excision repair (NER). Binds and bends DNA repair bubble substrate and breaks base stacking at the single-strand/double-strand DNA junction of the DNA bubble. Plays a role in base excision repair (BER) by promoting the binding of DNA glycosylase to its substrate and increasing DNA glycosylase catalytic activity that removes oxidized pyrimidines from DNA. Involved in transcription-coupled nucleotide excision repair (TCR) which allows RNA polymerase II-blocking lesions to be rapidly removed from the transcribed strand of active genes. Required for DNA replication fork maintenance and preservation of genomic stability. Involved in homologous recombination repair (HRR) induced by DNA replication stress. During HRR, binds to the replication fork with high specificity and stabilizes it. The protein is DNA excision repair protein ERCC-5 homolog (ercc5) of Xenopus laevis (African clawed frog).